The chain runs to 410 residues: Probable tRNA sulfurtransferase (410 aa).

One can recognise a THUMP domain in the interval 58 to 167 (AELTRRLQEV…RREIFVSVER (110 aa)). Residues 185-186 (LL), 210-211 (HF), arginine 267, glycine 289, and glutamine 298 each bind ATP.

The protein belongs to the ThiI family.

Its subcellular location is the cytoplasm. The catalysed reaction is [ThiI sulfur-carrier protein]-S-sulfanyl-L-cysteine + a uridine in tRNA + 2 reduced [2Fe-2S]-[ferredoxin] + ATP + H(+) = [ThiI sulfur-carrier protein]-L-cysteine + a 4-thiouridine in tRNA + 2 oxidized [2Fe-2S]-[ferredoxin] + AMP + diphosphate. The enzyme catalyses [ThiS sulfur-carrier protein]-C-terminal Gly-Gly-AMP + S-sulfanyl-L-cysteinyl-[cysteine desulfurase] + AH2 = [ThiS sulfur-carrier protein]-C-terminal-Gly-aminoethanethioate + L-cysteinyl-[cysteine desulfurase] + A + AMP + 2 H(+). It participates in cofactor biosynthesis; thiamine diphosphate biosynthesis. Functionally, catalyzes the ATP-dependent transfer of a sulfur to tRNA to produce 4-thiouridine in position 8 of tRNAs, which functions as a near-UV photosensor. Also catalyzes the transfer of sulfur to the sulfur carrier protein ThiS, forming ThiS-thiocarboxylate. This is a step in the synthesis of thiazole, in the thiamine biosynthesis pathway. The sulfur is donated as persulfide by IscS. This is Probable tRNA sulfurtransferase from Nocardia farcinica (strain IFM 10152).